The primary structure comprises 350 residues: MSLAEVRHDWQKAQIEALFALPMNDLLFKAHSIHRETFDPNEVQISRLLSIKTGACPEDCKYCPQSARYDTGLEKERLLEIDKVLTEAKSAKAAGASRFCMGAAWRNPRDKDMPYLTQMVKDVRALGMETCMTLGMLSSEQAGKLADAGLDYYNHNLDTSPEYYGDVITTRTYQSRLDTLTNVRASGMKVCSGGIVGMGEKATDRAGLLQQLANLEQHPDSVPINMLVKVAGTPFENIDDLDPLEFVRTIAVARILMPKSRVRLSAGRESMSDELQSMCFFAGANSIFYGCKLLTTPNPEENDDMSLFRRLGLHPEQGPQANIENDSALLAKASAKQDKSTKQFFDAAAL.

Residues asparagine 41 to arginine 268 enclose the Radical SAM core domain. [4Fe-4S] cluster is bound by residues cysteine 56, cysteine 60, and cysteine 63. Residues cysteine 100, cysteine 131, cysteine 191, and arginine 263 each coordinate [2Fe-2S] cluster.

It belongs to the radical SAM superfamily. Biotin synthase family. In terms of assembly, homodimer. [4Fe-4S] cluster is required as a cofactor. It depends on [2Fe-2S] cluster as a cofactor.

It carries out the reaction (4R,5S)-dethiobiotin + (sulfur carrier)-SH + 2 reduced [2Fe-2S]-[ferredoxin] + 2 S-adenosyl-L-methionine = (sulfur carrier)-H + biotin + 2 5'-deoxyadenosine + 2 L-methionine + 2 oxidized [2Fe-2S]-[ferredoxin]. The protein operates within cofactor biosynthesis; biotin biosynthesis; biotin from 7,8-diaminononanoate: step 2/2. In terms of biological role, catalyzes the conversion of dethiobiotin (DTB) to biotin by the insertion of a sulfur atom into dethiobiotin via a radical-based mechanism. The sequence is that of Biotin synthase from Shewanella frigidimarina (strain NCIMB 400).